Consider the following 517-residue polypeptide: ATP synthase subunit beta (517 aa).

Composition is skewed to low complexity over residues 1-22 and 29-42; these read MAKAATPKTTAAAEAKPAAAKA and AKTAAAKSDAAPKA. The interval 1-42 is disordered; the sequence is MAKAATPKTTAAAEAKPAAAKAPAKKAPAKTAAAKSDAAPKA. 195-202 contributes to the ATP binding site; sequence GGAGVGKT.

It belongs to the ATPase alpha/beta chains family. In terms of assembly, F-type ATPases have 2 components, CF(1) - the catalytic core - and CF(0) - the membrane proton channel. CF(1) has five subunits: alpha(3), beta(3), gamma(1), delta(1), epsilon(1). CF(0) has three main subunits: a(1), b(2) and c(9-12). The alpha and beta chains form an alternating ring which encloses part of the gamma chain. CF(1) is attached to CF(0) by a central stalk formed by the gamma and epsilon chains, while a peripheral stalk is formed by the delta and b chains.

Its subcellular location is the cell inner membrane. The enzyme catalyses ATP + H2O + 4 H(+)(in) = ADP + phosphate + 5 H(+)(out). In terms of biological role, produces ATP from ADP in the presence of a proton gradient across the membrane. The catalytic sites are hosted primarily by the beta subunits. In Brucella anthropi (strain ATCC 49188 / DSM 6882 / CCUG 24695 / JCM 21032 / LMG 3331 / NBRC 15819 / NCTC 12168 / Alc 37) (Ochrobactrum anthropi), this protein is ATP synthase subunit beta.